The following is a 338-amino-acid chain: Holliday junction branch migration complex subunit RuvB (338 aa).

The interval 4-184 (ADRLMSAAAV…FGIVQRLEFY (181 aa)) is large ATPase domain (RuvB-L). ATP is bound by residues Ile-23, Arg-24, Gly-65, Lys-68, Thr-69, Thr-70, 131 to 133 (EDY), Arg-174, Tyr-184, and Arg-221. Thr-69 is a Mg(2+) binding site. Positions 185–255 (QTGDLQHIVS…VAVSALNMLN (71 aa)) are small ATPAse domain (RuvB-S). A head domain (RuvB-H) region spans residues 258-338 (TEGFDFMDRK…GLEEHGGDPE (81 aa)). DNA-binding residues include Arg-294, Arg-313, and Arg-318.

The protein belongs to the RuvB family. In terms of assembly, homohexamer. Forms an RuvA(8)-RuvB(12)-Holliday junction (HJ) complex. HJ DNA is sandwiched between 2 RuvA tetramers; dsDNA enters through RuvA and exits via RuvB. An RuvB hexamer assembles on each DNA strand where it exits the tetramer. Each RuvB hexamer is contacted by two RuvA subunits (via domain III) on 2 adjacent RuvB subunits; this complex drives branch migration. In the full resolvosome a probable DNA-RuvA(4)-RuvB(12)-RuvC(2) complex forms which resolves the HJ.

It localises to the cytoplasm. The enzyme catalyses ATP + H2O = ADP + phosphate + H(+). In terms of biological role, the RuvA-RuvB-RuvC complex processes Holliday junction (HJ) DNA during genetic recombination and DNA repair, while the RuvA-RuvB complex plays an important role in the rescue of blocked DNA replication forks via replication fork reversal (RFR). RuvA specifically binds to HJ cruciform DNA, conferring on it an open structure. The RuvB hexamer acts as an ATP-dependent pump, pulling dsDNA into and through the RuvAB complex. RuvB forms 2 homohexamers on either side of HJ DNA bound by 1 or 2 RuvA tetramers; 4 subunits per hexamer contact DNA at a time. Coordinated motions by a converter formed by DNA-disengaged RuvB subunits stimulates ATP hydrolysis and nucleotide exchange. Immobilization of the converter enables RuvB to convert the ATP-contained energy into a lever motion, pulling 2 nucleotides of DNA out of the RuvA tetramer per ATP hydrolyzed, thus driving DNA branch migration. The RuvB motors rotate together with the DNA substrate, which together with the progressing nucleotide cycle form the mechanistic basis for DNA recombination by continuous HJ branch migration. Branch migration allows RuvC to scan DNA until it finds its consensus sequence, where it cleaves and resolves cruciform DNA. This Sodalis glossinidius (strain morsitans) protein is Holliday junction branch migration complex subunit RuvB.